A 141-amino-acid polypeptide reads, in one-letter code: ATP synthase epsilon chain (141 aa).

This sequence belongs to the ATPase epsilon chain family. F-type ATPases have 2 components, CF(1) - the catalytic core - and CF(0) - the membrane proton channel. CF(1) has five subunits: alpha(3), beta(3), gamma(1), delta(1), epsilon(1). CF(0) has three main subunits: a, b and c.

It localises to the cell inner membrane. Functionally, produces ATP from ADP in the presence of a proton gradient across the membrane. This Bordetella petrii (strain ATCC BAA-461 / DSM 12804 / CCUG 43448) protein is ATP synthase epsilon chain.